Consider the following 596-residue polypeptide: MADAEASAELPEEARPDGGTLRVLRDMASRLRIHSIRATCSTSSGHPTSCSSSAEIMSVLFFYIMRYKQSDPENPDNDRFVLAKRLSFVDVATGWLGQGLGVACGMAYTGKYFDRASYRVFCLMSDGESSEGSVWEAMAFASYYSLDNLVAIFDVNRLGHSGALPAEHCIDIYQRRCEAFGWNTYVVDGRDVEALCQVFWQASQVKHKPTAVVAKTFKGRGTPSIEDAESWHGKPMPRERADAIIKLIESQIETSRNLDPQLPIEDSPEVNITDVRMTSPPDYRVGDKIATRKACGLALAKLGYANDRVIVLDGDTKYSTFSEIFNKEYPERFIECFMAEQNMVSVALGCASRGRTIAFASTFAAFLTRAFDQIRIGGLSESNINIIGSHCGVSVGEDGASQMALEDIAMFRTIPKCTIFYPTDAVSTEHAVSLAANAKGMCFIRTTRPETMVIYTPQERFEIGQAKVLRHCVSDKVTVIGAGITVYEALAAADELLKQDIFIRVIDLFTIKPLDVTTIISSAKATEGRIITVEDHYPQGGIGEAVCAAVSMDPDIQVHSLAVSGVPQSGKSEELLDMYGISARHIIVAVKCMLLN.

H46 is a binding site for substrate. Thiamine diphosphate-binding positions include S49 and 94-96; that span reads GWL. D126 contacts Mg(2+). Thiamine diphosphate is bound by residues G127 and N156. 2 residues coordinate Mg(2+): N156 and L158. K218 and H232 together coordinate thiamine diphosphate. Substrate-binding residues include H232, R292, and S319. E340 and F366 together coordinate thiamine diphosphate. The Proton donor role is filled by E340. The substrate site is built by H390 and D398. Q402 provides a ligand contact to thiamine diphosphate. Position 448 (R448) interacts with substrate.

The protein belongs to the transketolase family. As to quaternary structure, homodimer. It depends on Mg(2+) as a cofactor. Ca(2+) serves as cofactor. Requires Mn(2+) as cofactor. Co(2+) is required as a cofactor. The cofactor is thiamine diphosphate.

The protein localises to the cytoplasm. It catalyses the reaction D-sedoheptulose 7-phosphate + D-glyceraldehyde 3-phosphate = aldehydo-D-ribose 5-phosphate + D-xylulose 5-phosphate. Catalyzes the transfer of a two-carbon ketol group from a ketose donor to an aldose acceptor, via a covalent intermediate with the cofactor thiamine pyrophosphate. In Macaca fascicularis (Crab-eating macaque), this protein is Transketolase-like protein 1 (TKTL1).